Reading from the N-terminus, the 69-residue chain is Cecropin-like peptide 1 (69 aa).

Positions 1–23 are cleaved as a signal peptide; it reads MNFTKLFVVFAVVLVAFAGQSEA. The residue at position 68 (Gln-68) is a Glutamine amide.

As to expression, following bacterial infection, expressed in fat body, trachea and muscle.

It localises to the secreted. Its function is as follows. Antimicrobial peptide active against Gram-negative bacteria E.coli KCCM 11234 (MIC&lt;=1.03 uM), E.aerogenes KCCM 12177 (MIC&lt;=2.07 uM) and P.aeruginosa KCCM 11328 (MIC&lt;=2.07 uM). Not active against various Gram-positive bacteria at concentrations up to 4.14 uM. The chain is Cecropin-like peptide 1 from Hermetia illucens (Black soldier fly).